Consider the following 511-residue polypeptide: Glucans biosynthesis protein G (511 aa).

The N-terminal stretch at 1 to 22 (MMKMRWLSAAVMLTLYTSSSWA) is a signal peptide.

Belongs to the OpgD/OpgG family.

The protein resides in the periplasm. It participates in glycan metabolism; osmoregulated periplasmic glucan (OPG) biosynthesis. Functionally, involved in the biosynthesis of osmoregulated periplasmic glucans (OPGs). The chain is Glucans biosynthesis protein G from Escherichia coli O81 (strain ED1a).